A 1955-amino-acid chain; its full sequence is Rootletin (1955 aa).

Coiled-coil stretches lie at residues 29–58 (EENR…ESIE), 162–223 (EENL…QQHT), 284–1303 (LMRK…AVES), 1368–1579 (VGVT…EELR), and 1607–1863 (RRWE…RTKG). 5 disordered regions span residues 321 to 341 (VTEN…DLKR), 391 to 451 (LTTK…KKLD), 504 to 551 (LKER…RSLK), 907 to 935 (EKLN…NEAV), and 961 to 998 (RDLE…QKTL). Basic and acidic residues-rich tracts occupy residues 326-341 (MKSE…DLKR) and 396-451 (GEID…KKLD). Basic and acidic residues-rich tracts occupy residues 907-931 (EKLN…ESSK), 961-982 (RDLE…KMEL), and 989-998 (EDRKKEQKTL).

The protein belongs to the rootletin family. As to expression, expressed in head ciliated neurons.

The protein resides in the cytoplasm. The protein localises to the cytoskeleton. It is found in the cilium basal body. Its subcellular location is the cilium axoneme. Its function is as follows. Major structural component of the ciliary rootlet, a cytoskeletal-like structure in ciliated cells which originates from the basal body at the proximal end of a cilium and extends proximally toward the cell nucleus. Required for cilia integrity and function in sensory neurons. Maintains cilia integrity, partly by modulating the assembly and transport of intraflagellar proteins along the ciliary axoneme. Required for normal mating behavior and normal responses to environmental and chemical stimuli. The chain is Rootletin from Caenorhabditis elegans.